Here is a 443-residue protein sequence, read N- to C-terminus: Protein translocase subunit SecY (443 aa).

10 helical membrane-spanning segments follow: residues 24–44 (LFVI…IPGI), 77–97 (IFAL…LLTV), 125–145 (LVLA…MPGM), 154–174 (FAFY…LMWL), 183–203 (IGNG…PPAI), 217–237 (FLVL…VVFV), 274–294 (VIPA…ASWF), 317–337 (YVLL…ALVF), 370–390 (MTRL…IPEF), and 397–417 (VPFY…MDFM).

The protein belongs to the SecY/SEC61-alpha family. In terms of assembly, component of the Sec protein translocase complex. Heterotrimer consisting of SecY, SecE and SecG subunits. The heterotrimers can form oligomers, although 1 heterotrimer is thought to be able to translocate proteins. Interacts with the ribosome. Interacts with SecDF, and other proteins may be involved. Interacts with SecA.

The protein resides in the cell inner membrane. In terms of biological role, the central subunit of the protein translocation channel SecYEG. Consists of two halves formed by TMs 1-5 and 6-10. These two domains form a lateral gate at the front which open onto the bilayer between TMs 2 and 7, and are clamped together by SecE at the back. The channel is closed by both a pore ring composed of hydrophobic SecY resides and a short helix (helix 2A) on the extracellular side of the membrane which forms a plug. The plug probably moves laterally to allow the channel to open. The ring and the pore may move independently. In Escherichia coli O157:H7, this protein is Protein translocase subunit SecY.